The following is a 232-amino-acid chain: MAKISKRRQAFAAKVDRQKLYAIEDALSLVKECASAKFDESIDVAVQLGIDAKKSDQVVRGSVVLPAGTGKSVRVAVFAQGEKAEQARAAGAEIVGMEDLAEQIKAGQMDFDIVIASPDTMRIVGTLGQILGPRGLMPNPKVGTVTPDVATAVKNAKAGQVQFRVDKAGIIHATIGRASFEPTALRSNLSALIEALQKAKPATSKGVYLRKIALSSTMGVGVRVDQATLAAQ.

This sequence belongs to the universal ribosomal protein uL1 family. As to quaternary structure, part of the 50S ribosomal subunit.

Binds directly to 23S rRNA. The L1 stalk is quite mobile in the ribosome, and is involved in E site tRNA release. Its function is as follows. Protein L1 is also a translational repressor protein, it controls the translation of the L11 operon by binding to its mRNA. The protein is Large ribosomal subunit protein uL1 of Burkholderia cenocepacia (strain ATCC BAA-245 / DSM 16553 / LMG 16656 / NCTC 13227 / J2315 / CF5610) (Burkholderia cepacia (strain J2315)).